Reading from the N-terminus, the 155-residue chain is DNA-directed RNA polymerases I, II, and III subunit RPABC2 (155 aa).

Positions 1 to 19 (MSDYEEAFNDGNENFEDFD) are enriched in acidic residues. The tract at residues 1-57 (MSDYEEAFNDGNENFEDFDVEHFSDEETYEEKPQFKDGETTDANGKTIVTGGNGPED) is disordered. Positions 20 to 39 (VEHFSDEETYEEKPQFKDGE) are enriched in basic and acidic residues. Ser24 is subject to Phosphoserine. The leucine-zipper stretch occupies residues 111–132 (LEGETDPLRIAMKELAEKKIPL).

It belongs to the archaeal Rpo6/eukaryotic RPB6 RNA polymerase subunit family. In terms of assembly, component of the RNA polymerase I (Pol I), RNA polymerase II (Pol II) and RNA polymerase III (Pol III) complexes. Component of the RNA polymerase I (Pol I) complex consisting of 14 subunits: RPA135, RPA190, RPC40, RPA14, RPB5, RPO26, RPA43, RPB8, RPA12, RPB10, RPC19, RPC10, RPA49 and RPA34. The complex is composed of a horseshoe-shaped core containing ten subunits (RPA135, RPA190, RPB5, RPO26, RPB8, RPB10, RPC10, RPA12, RPC19 and RPC40) where RPA135 and RPA190 form the DNA-binding cleft. Outside of the core, RPA14 and RPA43 form the stalk that mediates interactions with transcription initiation factors and newly synthesized RNA. Component of the RNA polymerase II (Pol II) complex consisting of 12 subunits: RPO21, RPB2, RPB3, RPB4, RPB5, RPO26, RPB7, RPB8, RPB9, RPB10 and RPC10. Component of the RNA polymerase III (Pol III) complex consisting of 17 subunits.

It localises to the cytoplasm. It is found in the nucleus. Functionally, DNA-dependent RNA polymerases catalyze the transcription of DNA into RNA using the four ribonucleoside triphosphates as substrates. Common component of RNA polymerases I, II and III which synthesize ribosomal RNA precursors, mRNA precursors and many functional non-coding RNAs, and small RNAs, such as 5S rRNA and tRNAs, respectively. Pol II is the central component of the basal RNA polymerase II transcription machinery. RNA polymerases are composed of mobile elements that move relative to each other. In Pol II, RPB6 is part of the clamp element and together with parts of RPB1 and RPB2 forms a pocket to which the RPB4-RPB7 subcomplex binds. In Saccharomyces cerevisiae (strain ATCC 204508 / S288c) (Baker's yeast), this protein is DNA-directed RNA polymerases I, II, and III subunit RPABC2 (RPO26).